The chain runs to 507 residues: Phosphoprotein (507 aa).

The interaction with N0 stretch occupies residues methionine 1–alanine 48. Disordered stretches follow at residues aspartate 41–asparagine 99, glycine 134–tyrosine 163, asparagine 201–glycine 231, and glycine 250–proline 273. At serine 86 the chain carries Phosphoserine. Over residues glycine 134 to aspartate 145 the composition is skewed to low complexity. Residues asparagine 146 to threonine 160 show a composition bias toward acidic residues. Phosphoserine is present on serine 151. Over residues serine 260 to glycine 270 the composition is skewed to low complexity. A multimerization region spans residues glycine 304–glycine 376. Interaction with the L polymerase regions lie at residues serine 361–leucine 377 and proline 396–leucine 410. Residues glycine 457–lysine 507 form a x domain (XD) region. The interval alanine 459–lysine 507 is interaction with the nucleocapsid (N-RNA).

The protein belongs to the morbillivirus P protein family. As to quaternary structure, homotetramer. Interacts (via multimerization domain and XD domain) with polymerase L; this interaction forms the polymerase L-P complex. Interacts (via N-terminus) with N0 (via Ncore); this interaction allows P to chaperon N0 to avoid N polymerization and non-specific RNA binding before encapsidation. Interacts (via C-terminus) with N-RNA template (via Ntail); this interaction maintains the P/L complex anchored to the nucleocapsid template during the sequential transcription. Interacts (via C-terminus) with protein C this interaction allows C to associate with the ribonucleocapsid. In terms of processing, phosphorylation on serines by host CK2 is necessary for the formation of viral factories.

In terms of biological role, essential cofactor of the RNA polymerase L that plays a central role in the transcription and replication by forming the polymerase complex with RNA polymerase L and recruiting L to the genomic N-RNA template for RNA synthesis. Also plays a central role in the encapsidation of nascent RNA chains by forming the encapsidation complex with the nucleocapsid protein N (N-P complex). Acts as a chaperone for newly synthesized free N protein, so-called N0, allowing encapsidation of nascent RNA chains during replication. The nucleoprotein protein N prevents excessive phosphorylation of P, which leads to down-regulation of viral transcription/ replication. Participates, together with N, in the formation of viral factories (viroplasms), which are large inclusions in the host cytoplasm where replication takes place. The chain is Phosphoprotein (P/V) from Measles virus (strain Edmonston-AIK-C vaccine) (MeV).